The following is a 532-amino-acid chain: Collagen alpha-1(XXIII) chain (532 aa).

The Cytoplasmic segment spans residues 1-23 (MGAGERAAGGGGAQDPGAGCGSR). A helical; Signal-anchor for type II membrane protein transmembrane segment spans residues 24–45 (ALSALCLLLSVGSAAACLLLGA). Topologically, residues 46 to 532 (QAAALHGRVA…GLPVPGCWHK (487 aa)) are extracellular. Disordered stretches follow at residues 102-296 (PSEC…GEQG) and 308-532 (LDAL…CWHK). 4 consecutive Collagen-like domains span residues 108–166 (PPGP…RGAQ), 173–232 (GPPG…PGKK), 240–298 (QPGL…QGDT), and 313–372 (GPPG…MGLS). A compositionally biased stretch (low complexity) spans 129 to 145 (QSGRDGYPGPLGLDGKP). Residues 174-184 (PPGPPGPPGAR) are compositionally biased toward pro residues. Over residues 196–207 (RGAQGPAGPRGE) the composition is skewed to low complexity. Over residues 314 to 326 (PPGPQGAPGPPGI) the composition is skewed to pro residues. Basic and acidic residues-rich tracts occupy residues 342–354 (DGEK…KGDP) and 380–393 (PKGE…DHLQ). Positions 403–414 (PGPPGPPGPPGP) are enriched in pro residues. 2 Collagen-like domains span residues 404–452 (GPPG…GPPG) and 455–514 (GLPG…PGLD). Composition is skewed to basic and acidic residues over residues 427-441 (DGAK…ERGP) and 478-495 (RGEK…ERGV).

Homotrimer. In terms of processing, undergoes proteolytic cleavage by furin protease to yield a 60 kDa soluble form that forms a homotrimer and exhibits a low affinity interaction with heparin.

It is found in the cell membrane. The chain is Collagen alpha-1(XXIII) chain (Col23a1) from Mus musculus (Mouse).